We begin with the raw amino-acid sequence, 362 residues long: 3-isopropylmalate dehydrogenase (362 aa).

Gly78–Glu91 contributes to the NAD(+) binding site. Residues Arg98, Arg108, Arg136, and Asp226 each contribute to the substrate site. Residues Asp226, Asp250, and Asp254 each contribute to the Mg(2+) site. Gly284–Asn296 contributes to the NAD(+) binding site.

Belongs to the isocitrate and isopropylmalate dehydrogenases family. LeuB type 1 subfamily. In terms of assembly, homodimer. Mg(2+) serves as cofactor. It depends on Mn(2+) as a cofactor.

The protein localises to the cytoplasm. The catalysed reaction is (2R,3S)-3-isopropylmalate + NAD(+) = 4-methyl-2-oxopentanoate + CO2 + NADH. The protein operates within amino-acid biosynthesis; L-leucine biosynthesis; L-leucine from 3-methyl-2-oxobutanoate: step 3/4. Catalyzes the oxidation of 3-carboxy-2-hydroxy-4-methylpentanoate (3-isopropylmalate) to 3-carboxy-4-methyl-2-oxopentanoate. The product decarboxylates to 4-methyl-2 oxopentanoate. This is 3-isopropylmalate dehydrogenase from Gloeobacter violaceus (strain ATCC 29082 / PCC 7421).